The following is an 884-amino-acid chain: Cadherin-1 (884 aa).

Residues 1–23 form the signal peptide; that stretch reads MGARCRSFSALLLLLQVSSWLCQ. Positions 24-156 are excised as a propeptide; sequence ELEPESCSPG…VYPGLRRQKR (133 aa). Residues 119-139 are disordered; sequence KSMGHHHHRHHHRDPASESNP. A compositionally biased stretch (basic residues) spans 121-131; it reads MGHHHHRHHHR. 5 consecutive Cadherin domains span residues 157-264, 265-377, 378-488, 489-595, and 596-699; these read DWVI…RPEF, TQEV…APVF, NPST…APIF, MPAE…DNAP, and IPEP…NCMK. Residues 157–709 are Extracellular-facing; sequence DWVIPPISCP…AGIVAAGLQV (553 aa). A Ca(2+)-binding site is contributed by D259. O-linked (Man...) serine glycans are attached at residues S282 and S287. Residue D290 coordinates Ca(2+). O-linked (Man...) threonine glycans are attached at residues T360, T472, T474, and T511. N-linked (GlcNAc...) asparagine glycosylation occurs at N560. T578, T580, and T582 each carry an O-linked (Man...) threonine glycan. N-linked (GlcNAc...) asparagine glycosylation occurs at N639. The chain crosses the membrane as a helical span at residues 710–733; the sequence is PAILGILGGILALLILILLLLLFL. At 734-884 the chain is on the cytoplasmic side; it reads RRRTVVKEPL…ADMYGGGEDD (151 aa). Residues 749 to 808 form a disordered region; it reads DTRDNVYYYDEEGGGEEDQDFDLSQLHRGLDARPEVTRNDVAPTLMSVPQYRPRPANPDE. 3 positions are modified to phosphotyrosine; by SRC: Y755, Y756, and Y757. Residues 757–769 show a composition bias toward acidic residues; sequence YDEEGGGEEDQDF. Residues 760-771 form a required for binding CTNND1 and PSEN1 region; that stretch reads EGGGEEDQDFDL. S772 is subject to Phosphoserine. Basic and acidic residues predominate over residues 776-786; sequence RGLDARPEVTR. 4 positions are modified to phosphoserine: S795, S840, S842, and S848. The tract at residues 813-884 is required for binding alpha, beta and gamma catenins; sequence IDENLKAADS…ADMYGGGEDD (72 aa).

In terms of assembly, homodimer; disulfide-linked. Component of an E-cadherin/ catenin adhesion complex composed of at least E-cadherin/CDH1, beta-catenin/CTNNB1 or gamma-catenin/JUP, and potentially alpha-catenin/CTNNA1; the complex is located to adherens junctions. Found in a complex composed of CDH1, RAP1A and PKP3; PKP3 acts as a scaffold protein within the complex, the complex is required for CDH1 localization to mature desmosome cell junctions. Interacts with the TRPV4 and CTNNB1 complex. Interacts with CTNND1. The stable association of CTNNA1 is controversial as CTNNA1 was shown not to bind to F-actin when assembled in the complex. Alternatively, the CTNNA1-containing complex may be linked to F-actin by other proteins such as LIMA1. Interaction with PSEN1, cleaves CDH1 resulting in the disassociation of cadherin-based adherens junctions (CAJs). Interacts with AJAP1 and DLGAP5. Interacts with TBC1D2. Interacts with LIMA1. Interacts with CAV1. Interacts with PIP5K1C. Interacts with RAB8B. Interacts with DDR1; this stabilizes CDH1 at the cell surface and inhibits its internalization. Interacts with RAPGEF2. Interacts with KLRG1. Forms a ternary complex composed of ADAM10, CADH1 and EPHA4; within the complex, CADH1 is cleaved by ADAM10 which disrupts adherens junctions. Interacts with SPEF1. Interacts with CTNNB1 and PKP2. Interacts with AMOTL2; the interaction may facilitate binding of radial actin fibers to cell junction complexes. Interacts with DSG3; the interaction is required for CDH1 localization to developing adherens junctions. In terms of processing, during apoptosis or with calcium influx, cleaved by a membrane-bound metalloproteinase (ADAM10), PS1/gamma-secretase and caspase-3. Processing by the metalloproteinase, induced by calcium influx, causes disruption of cell-cell adhesion and the subsequent release of beta-catenin into the cytoplasm. The residual membrane-tethered cleavage product is rapidly degraded via an intracellular proteolytic pathway. Cleavage by caspase-3 releases the cytoplasmic tail resulting in disintegration of the actin microfilament system. The gamma-secretase-mediated cleavage promotes disassembly of adherens junctions. During development of the cochlear organ of Corti, cleavage by ADAM10 at adherens junctions promotes pillar cell separation. O-glycosylated. O-manosylated by TMTC1, TMTC2, TMTC3 or TMTC4. Ser-287 and Thr-511 are O-manosylated by TMTC2 or TMTC4 but not TMTC1 or TMTC3. Post-translationally, N-glycosylation at Asn-639 is essential for expression, folding and trafficking. Addition of bisecting N-acetylglucosamine by MGAT3 modulates its cell membrane location. In terms of processing, ubiquitinated by a SCF complex containing SKP2, which requires prior phosphorylation by CK1/CSNK1A1. Ubiquitinated by CBLL1/HAKAI, requires prior phosphorylation at Tyr-756. As to expression, expressed in inner and outer pillar cells of the organ of Corti (at protein level). Expressed in granuloma macrophages (at protein level). Expressed in the epidermal keratinocytes of the skin from birth (at protein level). Expressed in non-neural epithelial tissues.

The protein resides in the cell junction. It localises to the adherens junction. It is found in the cell membrane. The protein localises to the endosome. Its subcellular location is the golgi apparatus. The protein resides in the trans-Golgi network. It localises to the cytoplasm. It is found in the desmosome. In terms of biological role, cadherins are calcium-dependent cell adhesion proteins. They preferentially interact with themselves in a homophilic manner in connecting cells; cadherins may thus contribute to the sorting of heterogeneous cell types. CDH1 is involved in mechanisms regulating cell-cell adhesions, mobility and proliferation of epithelial cells. Promotes organization of radial actin fiber structure and cellular response to contractile forces, via its interaction with AMOTL2 which facilitates anchoring of radial actin fibers to CDH1 junction complexes at the cell membrane. Plays a role in the early stages of desmosome cell-cell junction formation via facilitating the recruitment of DSG2 and DSP to desmosome plaques. Has a potent invasive suppressor role. It is a ligand for integrin alpha-E/beta-7. Functionally, E-Cad/CTF2 promotes non-amyloidogenic degradation of Abeta precursors. Has a strong inhibitory effect on APP C99 and C83 production. Its function is as follows. (Microbial infection) Does not function as a receptor for L.monocytogenes internalin A (InlA); mutating a single surface-exposed residue confers receptor activity to this protein and promotes uptake of the bacteria. This is Cadherin-1 (Cdh1) from Mus musculus (Mouse).